A 603-amino-acid chain; its full sequence is Arginine--tRNA ligase (603 aa).

The short motif at 143–153 (PNIAKEMHVGH) is the 'HIGH' region element.

The protein belongs to the class-I aminoacyl-tRNA synthetase family. Monomer.

It localises to the cytoplasm. It carries out the reaction tRNA(Arg) + L-arginine + ATP = L-arginyl-tRNA(Arg) + AMP + diphosphate. The polypeptide is Arginine--tRNA ligase (Prochlorococcus marinus (strain MIT 9211)).